A 443-amino-acid polypeptide reads, in one-letter code: Glutamyl-tRNA reductase (443 aa).

Residues 49 to 52 (TCNR), Ser-109, 114 to 116 (EPQ), and Gln-120 each bind substrate. The Nucleophile role is filled by Cys-50. 189 to 194 (GAGKMC) contributes to the NADP(+) binding site. Residues 421-443 (PDSQQTGGDSVEKDADSKQDLTS) are disordered. Residues 430 to 443 (SVEKDADSKQDLTS) are compositionally biased toward basic and acidic residues.

It belongs to the glutamyl-tRNA reductase family. In terms of assembly, homodimer.

It carries out the reaction (S)-4-amino-5-oxopentanoate + tRNA(Glu) + NADP(+) = L-glutamyl-tRNA(Glu) + NADPH + H(+). Its pathway is porphyrin-containing compound metabolism; protoporphyrin-IX biosynthesis; 5-aminolevulinate from L-glutamyl-tRNA(Glu): step 1/2. In terms of biological role, catalyzes the NADPH-dependent reduction of glutamyl-tRNA(Glu) to glutamate 1-semialdehyde (GSA). This chain is Glutamyl-tRNA reductase, found in Syntrophotalea carbinolica (strain DSM 2380 / NBRC 103641 / GraBd1) (Pelobacter carbinolicus).